A 224-amino-acid polypeptide reads, in one-letter code: Ribosomal RNA small subunit methyltransferase G (224 aa).

S-adenosyl-L-methionine-binding positions include glycine 92, leucine 97, 143 to 144 (VE), and arginine 156.

It belongs to the methyltransferase superfamily. RNA methyltransferase RsmG family.

The protein localises to the cytoplasm. It carries out the reaction guanosine(527) in 16S rRNA + S-adenosyl-L-methionine = N(7)-methylguanosine(527) in 16S rRNA + S-adenosyl-L-homocysteine. Specifically methylates the N7 position of guanine in position 527 of 16S rRNA. The polypeptide is Ribosomal RNA small subunit methyltransferase G (Albidiferax ferrireducens (strain ATCC BAA-621 / DSM 15236 / T118) (Rhodoferax ferrireducens)).